Reading from the N-terminus, the 25-residue chain is Kappa-conotoxin RIIIJ (25 aa).

Residues Pro-2, Pro-3, Pro-7, Pro-8, Pro-13, Pro-15, and Pro-21 each carry the 4-hydroxyproline modification. 3 cysteine pairs are disulfide-bonded: Cys-4-Cys-17, Cys-5-Cys-22, and Cys-12-Cys-23.

It belongs to the conotoxin M superfamily. In terms of tissue distribution, expressed by the venom duct.

The protein localises to the secreted. Kappa-conotoxins inhibits voltage-gated potassium channels. This toxin dose-dependently and reversibly inhibits the Kv1.2/KCNA2 channel in mammalia. Does not exert protective effect on cardiac tissue when administered after an ischemic event. This is Kappa-conotoxin RIIIJ from Conus radiatus (Rayed cone).